The sequence spans 85 residues: Small ribosomal subunit protein bS20 (85 aa).

Belongs to the bacterial ribosomal protein bS20 family.

Its function is as follows. Binds directly to 16S ribosomal RNA. This Borrelia hermsii (strain HS1 / DAH) protein is Small ribosomal subunit protein bS20.